The primary structure comprises 113 residues: Non-specific lipid-transfer protein 6 (113 aa).

The first 19 residues, 1 to 19, serve as a signal peptide directing secretion; it reads MRSLLLAVCLVLALHCGEA. Disulfide bonds link C23–C70, C33–C47, C48–C95, and C68–C109.

The protein belongs to the plant LTP family.

Its function is as follows. Plant non-specific lipid-transfer proteins transfer phospholipids as well as galactolipids across membranes. May play a role in wax or cutin deposition in the cell walls of expanding epidermal cells and certain secretory tissues. The polypeptide is Non-specific lipid-transfer protein 6 (LTP6) (Arabidopsis thaliana (Mouse-ear cress)).